We begin with the raw amino-acid sequence, 373 residues long: Lipoyl synthase (373 aa).

The interval histidine 12–isoleucine 36 is disordered. Cysteine 81, cysteine 86, cysteine 92, cysteine 107, cysteine 111, cysteine 114, and serine 323 together coordinate [4Fe-4S] cluster. Residues phenylalanine 93 to serine 312 form the Radical SAM core domain. Positions proline 346–arginine 373 are disordered.

It belongs to the radical SAM superfamily. Lipoyl synthase family. [4Fe-4S] cluster serves as cofactor.

The protein resides in the cytoplasm. It carries out the reaction [[Fe-S] cluster scaffold protein carrying a second [4Fe-4S](2+) cluster] + N(6)-octanoyl-L-lysyl-[protein] + 2 oxidized [2Fe-2S]-[ferredoxin] + 2 S-adenosyl-L-methionine + 4 H(+) = [[Fe-S] cluster scaffold protein] + N(6)-[(R)-dihydrolipoyl]-L-lysyl-[protein] + 4 Fe(3+) + 2 hydrogen sulfide + 2 5'-deoxyadenosine + 2 L-methionine + 2 reduced [2Fe-2S]-[ferredoxin]. It participates in protein modification; protein lipoylation via endogenous pathway; protein N(6)-(lipoyl)lysine from octanoyl-[acyl-carrier-protein]: step 2/2. Catalyzes the radical-mediated insertion of two sulfur atoms into the C-6 and C-8 positions of the octanoyl moiety bound to the lipoyl domains of lipoate-dependent enzymes, thereby converting the octanoylated domains into lipoylated derivatives. In Xylella fastidiosa (strain 9a5c), this protein is Lipoyl synthase.